The following is a 449-amino-acid chain: Baeyer-Villiger oxidase GME11358 (449 aa).

This sequence belongs to the questin oxidase family.

The protein operates within secondary metabolite biosynthesis. Functionally, baeyer-Villiger oxidase; part of the gene cluster that mediates the biosynthesis of dibenzodioxocinones such as pestalotiollide B, a novel class of inhibitors against cholesterol ester transfer protein (CEPT). The biosynthesis initiates from condensation of acetate and malonate units catalyzed by the non-reducing PKS pks8/GME11356. Pks8/GME11356 lacks a thioesterase (TE) domain, which is important to the cyclizing of the third ring of atrochrysone carboxylic acid, and the esterase GME11355 might play the role of TE and catalyzes the cyclization reaction of the C ring. The lactamase-like protein GME11357 (or other beta-lactamases in Pestalotiopsis microspora) probably hydrolyzes the thioester bond between the ACP of pks8/GME11356 and the intermediate to release atrochrysone carboxylic acid, which is spontaneously dehydrates to form endocrocin anthrone. Endocrocin anthrone is further converted to emodin via the endocrocin intermediate. Emodin is then oxidized by several enzymes such as the Baeyer-Villiger oxidase GME11358, the oxidoreductase GME11367, the short chain dehydrogenase/reductase GME11373, as well as by other oxidoreductases from the cluster, to modify the A and C rings and open the B ring, and finally yield monodictyphenone. The prenyltransferase GME11375 may catalyze the addition reaction between the C5 side chains and the carbon bone of dibenzodioxocinones. The remaining biochemical reactions to the final product dibenzodioxocinones should be methylation catalyzed by methyltransferase GME11366 and reduction and lactonization reaction catalyzed by a series of oxidordeuctases. This Pestalotiopsis microspora protein is Baeyer-Villiger oxidase GME11358.